A 393-amino-acid polypeptide reads, in one-letter code: Lipoyl synthase, mitochondrial (393 aa).

7 residues coordinate [4Fe-4S] cluster: Cys-115, Cys-120, Cys-126, Cys-146, Cys-150, Cys-153, and Ser-362. The Radical SAM core domain occupies Glu-131–Arg-351.

The protein belongs to the radical SAM superfamily. Lipoyl synthase family. The cofactor is [4Fe-4S] cluster.

The protein resides in the mitochondrion. The enzyme catalyses [[Fe-S] cluster scaffold protein carrying a second [4Fe-4S](2+) cluster] + N(6)-octanoyl-L-lysyl-[protein] + 2 oxidized [2Fe-2S]-[ferredoxin] + 2 S-adenosyl-L-methionine + 4 H(+) = [[Fe-S] cluster scaffold protein] + N(6)-[(R)-dihydrolipoyl]-L-lysyl-[protein] + 4 Fe(3+) + 2 hydrogen sulfide + 2 5'-deoxyadenosine + 2 L-methionine + 2 reduced [2Fe-2S]-[ferredoxin]. It functions in the pathway protein modification; protein lipoylation via endogenous pathway; protein N(6)-(lipoyl)lysine from octanoyl-[acyl-carrier-protein]: step 2/2. Catalyzes the radical-mediated insertion of two sulfur atoms into the C-6 and C-8 positions of the octanoyl moiety bound to the lipoyl domains of lipoate-dependent enzymes, thereby converting the octanoylated domains into lipoylated derivatives. This Vitis vinifera (Grape) protein is Lipoyl synthase, mitochondrial.